Reading from the N-terminus, the 431-residue chain is Adenylosuccinate synthetase (431 aa).

GTP contacts are provided by residues 13–19 (GDEGKGK) and 41–43 (GHT). Asp-14 (proton acceptor) is an active-site residue. Asp-14 and Gly-41 together coordinate Mg(2+). Residues 14-17 (DEGK), 39-42 (NAGH), Thr-130, Arg-144, Gln-225, Thr-240, and Arg-304 each bind IMP. The Proton donor role is filled by His-42. Substrate is bound at residue 300–306 (AVTGRPR). Residues Arg-306, 332 to 334 (KLD), and 415 to 417 (STG) contribute to the GTP site.

The protein belongs to the adenylosuccinate synthetase family. Homodimer. Mg(2+) is required as a cofactor.

The protein localises to the cytoplasm. It carries out the reaction IMP + L-aspartate + GTP = N(6)-(1,2-dicarboxyethyl)-AMP + GDP + phosphate + 2 H(+). It participates in purine metabolism; AMP biosynthesis via de novo pathway; AMP from IMP: step 1/2. Functionally, plays an important role in the de novo pathway of purine nucleotide biosynthesis. Catalyzes the first committed step in the biosynthesis of AMP from IMP. This chain is Adenylosuccinate synthetase, found in Legionella pneumophila subsp. pneumophila (strain Philadelphia 1 / ATCC 33152 / DSM 7513).